Reading from the N-terminus, the 698-residue chain is Endogenous retrovirus group K member 21 Env polyprotein (698 aa).

A disordered region spans residues 1-25 (MHPSEMQRKAPPRRRRHRNRAPLTH). A signal peptide spans 1–88 (MHPSEMQRKA…ALMIVSMVVS (88 aa)). A compositionally biased stretch (basic residues) spans 10–20 (APPRRRRHRNR). The Extracellular portion of the chain corresponds to 89-631 (LPMPAGAAAA…NLNPVTWVKT (543 aa)). N99, N127, N152, N273, N354, N371, and N460 each carry an N-linked (GlcNAc...) asparagine glycan. A fusion peptide region spans residues 465–485 (FIFTLIAVIMGLIAVTAMAAV). N-linked (GlcNAc...) asparagine glycosylation is found at N506, N553, N565, and N584. Residues 632–652 (IGSTTIINLILILVCLFCLLL) traverse the membrane as a helical segment. Residues 653-698 (VCRCTQQLRRDSDHRERAMMTMVVLSKRKGGNVGKSKRDQIVTVSV) lie on the Cytoplasmic side of the membrane.

The protein belongs to the beta type-B retroviral envelope protein family. HERV class-II K(HML-2) env subfamily. In terms of assembly, the surface (SU) and transmembrane (TM) proteins form a heterodimer. SU and TM are attached by noncovalent interactions or by a labile interchain disulfide bond. Specific enzymatic cleavages in vivo yield the mature SU and TM proteins.

The protein localises to the cell membrane. It localises to the virion. Retroviral envelope proteins mediate receptor recognition and membrane fusion during early infection. Endogenous envelope proteins may have kept, lost or modified their original function during evolution. This endogenous envelope protein has lost its original fusogenic properties. In terms of biological role, SU mediates receptor recognition. Functionally, TM anchors the envelope heterodimer to the viral membrane through one transmembrane domain. The other hydrophobic domain, called fusion peptide, mediates fusion of the viral membrane with the target cell membrane. The polypeptide is Endogenous retrovirus group K member 21 Env polyprotein (ERVK-21) (Homo sapiens (Human)).